A 600-amino-acid chain; its full sequence is Glutamine--fructose-6-phosphate aminotransferase [isomerizing] (600 aa).

C2 (nucleophile; for GATase activity) is an active-site residue. One can recognise a Glutamine amidotransferase type-2 domain in the interval C2–E217. 2 SIS domains span residues I283–E422 and L452–P590. The active-site For Fru-6P isomerization activity is K595.

Homodimer.

The protein resides in the cytoplasm. It carries out the reaction D-fructose 6-phosphate + L-glutamine = D-glucosamine 6-phosphate + L-glutamate. Functionally, catalyzes the first step in hexosamine metabolism, converting fructose-6P into glucosamine-6P using glutamine as a nitrogen source. The protein is Glutamine--fructose-6-phosphate aminotransferase [isomerizing] of Bacillus thuringiensis subsp. konkukian (strain 97-27).